The primary structure comprises 93 residues: YcgL domain-containing protein VV1058 (93 aa).

Residues 1–84 form the YcgL domain; the sequence is MLCSIYKSSK…PPENLLQQHK (84 aa). The tract at residues 74 to 93 is disordered; that stretch reads PPPENLLQQHKERKAQQKND.

The sequence is that of YcgL domain-containing protein VV1058 from Vibrio vulnificus (strain YJ016).